The sequence spans 384 residues: Ribosomal RNA large subunit methyltransferase G (384 aa).

It belongs to the methyltransferase superfamily. RlmG family.

Its subcellular location is the cytoplasm. It carries out the reaction guanosine(1835) in 23S rRNA + S-adenosyl-L-methionine = N(2)-methylguanosine(1835) in 23S rRNA + S-adenosyl-L-homocysteine + H(+). Specifically methylates the guanine in position 1835 (m2G1835) of 23S rRNA. The chain is Ribosomal RNA large subunit methyltransferase G from Pseudoalteromonas atlantica (strain T6c / ATCC BAA-1087).